The sequence spans 250 residues: Acyl-coenzyme A diphosphatase fit1 (250 aa).

The Cytoplasmic portion of the chain corresponds to 1–23; that stretch reads MTEKTASHYWNEETSILKLRRKD. The chain crosses the membrane as a helical span at residues 24-44; sequence ILLFEIYATTLLLGSIYSIYV. The Lumenal portion of the chain corresponds to 45–58; sequence DKWSITSYFGNSKN. A helical membrane pass occupies residues 59–79; that stretch reads LINLIFVKRGWFWTSLVYFYH. At 80 to 95 the chain is on the cytoplasmic side; that stretch reads AWDQKRNKIDFKFISR. The helical transmembrane segment at 96 to 116 threads the bilayer; the sequence is YIVATLWWMFVTQWFIGPGLI. Over 117 to 160 the chain is Lumenal; sequence DRTFALSGGSCKNFDGDSSVFIPLTASTCKGLNGSWSGGHDLSG. A glycan (N-linked (GlcNAc...) asparagine) is linked at asparagine 149. Histidine 161 is a catalytic residue. Residues 161-181 form a helical membrane-spanning segment; the sequence is HVFLLTHSSLFMLSENFSFIL. At 182–191 the chain is on the cytoplasmic side; the sequence is NNGIKATSTK. A helical transmembrane segment spans residues 192–212; sequence VLFGLLGLWWWMLFVTASFYH. Histidine 212 is an active-site residue. Threonine 213 is a topological domain (lumenal). Residues 214–234 traverse the membrane as a helical segment; the sequence is TFEKCTGFFSGILEWSIVYVF. Over 235 to 250 the chain is Cytoplasmic; that stretch reads SSRMPAVADLLGSSDY.

The protein belongs to the FIT family. Fungal FIT2B/SCS3 subfamily.

Its subcellular location is the endoplasmic reticulum membrane. The enzyme catalyses an acyl-CoA + H2O = an acyl-4'-phosphopantetheine + adenosine 3',5'-bisphosphate + 2 H(+). It catalyses the reaction (9Z)-octadecenoyl-CoA + H2O = S-(9Z-octadecenoyl)-4'-phosphopantetheine + adenosine 3',5'-bisphosphate + 2 H(+). The catalysed reaction is (5Z,8Z,11Z,14Z)-eicosatetraenoyl-CoA + H2O = S-(5Z,8Z,11Z,14Z-eicosatetraenoyl)-4'-phosphopantetheine + adenosine 3',5'-bisphosphate + 2 H(+). It carries out the reaction hexadecanoyl-CoA + H2O = S-hexadecanoyl-4'-phosphopantetheine + adenosine 3',5'-bisphosphate + 2 H(+). Functionally, fatty acyl-coenzyme A (CoA) diphosphatase that hydrolyzes fatty acyl-CoA to yield acyl-4'-phosphopantetheine and adenosine 3',5'-bisphosphate. Preferentially hydrolyzes unsaturated long-chain acyl-CoA substrates in the endoplasmic reticulum (ER) lumen. This catalytic activity is required for maintaining ER structure and for lipid droplets (LDs) biogenesis, which are lipid storage organelles involved in maintaining lipid and energy homeostasis. May directly bind to diacylglycerol (DAGs) and triacylglycerol, which is also important for LD biogenesis. May support directional budding of nacent LDs from the ER into the cytosol by reducing DAG levels at sites of LD formation. May play a role in the regulation of cell morphology and cytoskeletal organization. In Schizosaccharomyces pombe (strain 972 / ATCC 24843) (Fission yeast), this protein is Acyl-coenzyme A diphosphatase fit1.